The following is a 38-amino-acid chain: Esterase-5 (38 aa).

Residues 1 to 38 (SAAADPLIVELPNGKVRGRDNEGYYEAEGIPRAEPPVG) form a disordered region.

The protein belongs to the type-B carboxylesterase/lipase family.

The enzyme catalyses a carboxylic ester + H2O = an alcohol + a carboxylate + H(+). This is Esterase-5 (Est-5) from Drosophila mojavensis (Fruit fly).